A 197-amino-acid chain; its full sequence is Putative AgrB-like protein (197 aa).

4 helical membrane-spanning segments follow: residues phenylalanine 29–leucine 49, serine 79–alanine 99, tyrosine 102–tyrosine 122, and isoleucine 143–glycine 163.

This sequence belongs to the AgrB family.

Its subcellular location is the cell membrane. May be involved in the proteolytic processing of a quorum sensing system signal molecule precursor. This is Putative AgrB-like protein from Halalkalibacterium halodurans (strain ATCC BAA-125 / DSM 18197 / FERM 7344 / JCM 9153 / C-125) (Bacillus halodurans).